Reading from the N-terminus, the 365-residue chain is DNA replication and repair protein RecF (365 aa).

30–37 lines the ATP pocket; it reads GRNAQGKT.

This sequence belongs to the RecF family.

It is found in the cytoplasm. The RecF protein is involved in DNA metabolism; it is required for DNA replication and normal SOS inducibility. RecF binds preferentially to single-stranded, linear DNA. It also seems to bind ATP. This chain is DNA replication and repair protein RecF, found in Streptococcus pneumoniae (strain CGSP14).